The chain runs to 89 residues: Small ribosomal subunit protein uS15 (89 aa).

Belongs to the universal ribosomal protein uS15 family. As to quaternary structure, part of the 30S ribosomal subunit. Forms a bridge to the 50S subunit in the 70S ribosome, contacting the 23S rRNA.

Its function is as follows. One of the primary rRNA binding proteins, it binds directly to 16S rRNA where it helps nucleate assembly of the platform of the 30S subunit by binding and bridging several RNA helices of the 16S rRNA. Forms an intersubunit bridge (bridge B4) with the 23S rRNA of the 50S subunit in the ribosome. The chain is Small ribosomal subunit protein uS15 from Proteus mirabilis (strain HI4320).